The chain runs to 122 residues: Large ribosomal subunit protein uL14 (122 aa).

This sequence belongs to the universal ribosomal protein uL14 family. As to quaternary structure, part of the 50S ribosomal subunit. Forms a cluster with proteins L3 and L19. In the 70S ribosome, L14 and L19 interact and together make contacts with the 16S rRNA in bridges B5 and B8.

Its function is as follows. Binds to 23S rRNA. Forms part of two intersubunit bridges in the 70S ribosome. This Mycobacterium tuberculosis (strain ATCC 25177 / H37Ra) protein is Large ribosomal subunit protein uL14.